Here is a 75-residue protein sequence, read N- to C-terminus: Exodeoxyribonuclease 7 small subunit (75 aa).

This sequence belongs to the XseB family. In terms of assembly, heterooligomer composed of large and small subunits.

It localises to the cytoplasm. The catalysed reaction is Exonucleolytic cleavage in either 5'- to 3'- or 3'- to 5'-direction to yield nucleoside 5'-phosphates.. Functionally, bidirectionally degrades single-stranded DNA into large acid-insoluble oligonucleotides, which are then degraded further into small acid-soluble oligonucleotides. This is Exodeoxyribonuclease 7 small subunit from Chlamydia abortus (strain DSM 27085 / S26/3) (Chlamydophila abortus).